The following is a 188-amino-acid chain: dCTP deaminase (188 aa).

DCTP-binding positions include 111–116 (KSTYAR), 135–137 (TLE), Q156, Y170, and Q180. The active-site Proton donor/acceptor is the E137.

The protein belongs to the dCTP deaminase family. Homotrimer.

It carries out the reaction dCTP + H2O + H(+) = dUTP + NH4(+). It participates in pyrimidine metabolism; dUMP biosynthesis; dUMP from dCTP (dUTP route): step 1/2. Functionally, catalyzes the deamination of dCTP to dUTP. This is dCTP deaminase from Paracidovorax citrulli (strain AAC00-1) (Acidovorax citrulli).